Reading from the N-terminus, the 162-residue chain is uncharacterized protein (162 aa).

An N-terminal signal peptide occupies residues 1–18 (MRKTFLTLLCVSSAIAHA).

It belongs to the fimbrial protein family.

Functionally, part of the yfcOPQRSUV fimbrial operon. Could contribute to adhesion to various surfaces in specific environmental niches. Increases adhesion to eukaryotic T24 bladder epithelial cells in the absence of fim genes. This is an uncharacterized protein from Escherichia coli (strain K12).